A 58-amino-acid chain; its full sequence is uncharacterized protein (58 aa).

This is an uncharacterized protein from Bacillus subtilis (strain 168).